Here is a 172-residue protein sequence, read N- to C-terminus: RNA pyrophosphohydrolase (172 aa).

The Nudix hydrolase domain occupies 6–149; that stretch reads GFRANVGIII…KRDVYRKVMK (144 aa). The short motif at 38–59 is the Nudix box element; the sequence is GGLDDGESAEEAMYRELYEEVG.

Belongs to the Nudix hydrolase family. RppH subfamily. A divalent metal cation serves as cofactor.

Functionally, accelerates the degradation of transcripts by removing pyrophosphate from the 5'-end of triphosphorylated RNA, leading to a more labile monophosphorylated state that can stimulate subsequent ribonuclease cleavage. This chain is RNA pyrophosphohydrolase, found in Shewanella denitrificans (strain OS217 / ATCC BAA-1090 / DSM 15013).